A 233-amino-acid chain; its full sequence is Putative 26S proteasome non-ATPase regulatory subunit 8 homolog B (233 aa).

N-acetylmethionine is present on Met1. The region spanning 38–217 (DHYLISLSLN…APCKEIPSLQ (180 aa)) is the PCI domain.

This sequence belongs to the proteasome subunit S14 family. As to quaternary structure, component of the 19S regulatory particle (RP/PA700) lid subcomplex of the 26S proteasome. The 26S proteasome is composed of a core protease (CP), known as the 20S proteasome, capped at one or both ends by the 19S regulatory particle (RP/PA700). The RP/PA700 complex is composed of at least 17 different subunits in two subcomplexes, the base and the lid, which form the portions proximal and distal to the 20S proteolytic core, respectively. Interacts with UCH1 and UCH2.

Functionally, acts as a regulatory subunit of the 26S proteasome which is involved in the ATP-dependent degradation of ubiquitinated proteins. In Arabidopsis thaliana (Mouse-ear cress), this protein is Putative 26S proteasome non-ATPase regulatory subunit 8 homolog B.